A 70-amino-acid polypeptide reads, in one-letter code: Large ribosomal subunit protein bL31 (70 aa).

Residues cysteine 16, cysteine 18, cysteine 37, and cysteine 40 each coordinate Zn(2+).

It belongs to the bacterial ribosomal protein bL31 family. Type A subfamily. Part of the 50S ribosomal subunit. It depends on Zn(2+) as a cofactor.

Its function is as follows. Binds the 23S rRNA. This chain is Large ribosomal subunit protein bL31, found in Erwinia tasmaniensis (strain DSM 17950 / CFBP 7177 / CIP 109463 / NCPPB 4357 / Et1/99).